Reading from the N-terminus, the 220-residue chain is Putative GED domain-containing protein DNM1P46 (220 aa).

Residues 18–46 (VSVETRNVKPQGKDSKAEENGSHSFMHSM) form a disordered region. Residues 28 to 38 (QGKDSKAEENG) are compositionally biased toward basic and acidic residues. In terms of domain architecture, GED spans 54–149 (METTQNLVDS…CCPTCTRLGT (96 aa)). The disordered stretch occupies residues 173 to 194 (DTPGGVGRAGTAARRDSRGNEK). The span at 185–194 (ARRDSRGNEK) shows a compositional bias: basic and acidic residues.

The protein is Putative GED domain-containing protein DNM1P46 (DNM1P46) of Homo sapiens (Human).